Here is a 189-residue protein sequence, read N- to C-terminus: Phosphoheptose isomerase (189 aa).

The SIS domain maps to 34–189; that stretch reads VADTLKNGKK…CQAVDEAFRG (156 aa). 49–51 serves as a coordination point for substrate; that stretch reads NGG. 2 residues coordinate Zn(2+): His58 and Glu62. Substrate contacts are provided by residues Glu62, 91–92, 117–119, Ser122, and Gln169; these read ND and STS. Zn(2+)-binding residues include Gln169 and His177.

Belongs to the SIS family. GmhA subfamily. Homotetramer. Zn(2+) is required as a cofactor.

It is found in the cytoplasm. The enzyme catalyses 2 D-sedoheptulose 7-phosphate = D-glycero-alpha-D-manno-heptose 7-phosphate + D-glycero-beta-D-manno-heptose 7-phosphate. The protein operates within carbohydrate biosynthesis; D-glycero-D-manno-heptose 7-phosphate biosynthesis; D-glycero-alpha-D-manno-heptose 7-phosphate and D-glycero-beta-D-manno-heptose 7-phosphate from sedoheptulose 7-phosphate: step 1/1. Functionally, catalyzes the isomerization of sedoheptulose 7-phosphate in D-glycero-D-manno-heptose 7-phosphate. This Campylobacter concisus (strain 13826) protein is Phosphoheptose isomerase.